Consider the following 153-residue polypeptide: SsrA-binding protein (153 aa).

A disordered region spans residues E131–R153.

Belongs to the SmpB family.

It localises to the cytoplasm. Functionally, required for rescue of stalled ribosomes mediated by trans-translation. Binds to transfer-messenger RNA (tmRNA), required for stable association of tmRNA with ribosomes. tmRNA and SmpB together mimic tRNA shape, replacing the anticodon stem-loop with SmpB. tmRNA is encoded by the ssrA gene; the 2 termini fold to resemble tRNA(Ala) and it encodes a 'tag peptide', a short internal open reading frame. During trans-translation Ala-aminoacylated tmRNA acts like a tRNA, entering the A-site of stalled ribosomes, displacing the stalled mRNA. The ribosome then switches to translate the ORF on the tmRNA; the nascent peptide is terminated with the 'tag peptide' encoded by the tmRNA and targeted for degradation. The ribosome is freed to recommence translation, which seems to be the essential function of trans-translation. The protein is SsrA-binding protein of Parabacteroides distasonis (strain ATCC 8503 / DSM 20701 / CIP 104284 / JCM 5825 / NCTC 11152).